A 268-amino-acid polypeptide reads, in one-letter code: AN1-type zinc finger protein 1 (268 aa).

Ala-2 carries the post-translational modification N-acetylalanine. 2 consecutive AN1-type zinc fingers follow at residues 4–52 and 58–106; these read LDIG…VINE and QHTS…IPKP. Zn(2+)-binding residues include Cys-10, Cys-15, Cys-25, Cys-28, Cys-33, His-36, His-42, Cys-44, Cys-64, Cys-69, Cys-79, Cys-82, Cys-87, His-90, His-96, and Cys-98. Residues 160–260 are ubiquitin-like; the sequence is QTERIYFQVF…EYLNDEEQFC (101 aa).

As to quaternary structure, associates with the 26S proteasome; this association occurs upon exposure to arsenite and is reduced in the presence of ATP. Interacts (via AN1-type 1 and 2 zinc fingers) with PSMD1; this interaction is increased upon arsenite treatment and occurs in an ATP-independent manner. Interacts with PSMC4. Interacts with PSMA1. Interacts (via its ubiquitin-like region) with VCP; this interaction occurs in an arsenite-dependent manner and is necessary for the recruitment of the ubiquitin-selective ATPase VCP to stress granules (SGs).

The protein localises to the cytoplasm. It localises to the stress granule. In terms of biological role, plays a role in the regulation of cytoplasmic stress granules (SGs) turnover. SGs are dynamic and transient cytoplasmic ribonucleoprotein assemblies important for cellular protein homeostasis when protein production is suspended after acute exogenous stress. Associates with SGs and is involved in the efficient and specific arsenite-induced clearance process of SGs through the recruitment of the ubiquitin-selective ATPase VCP and the 26S proteasome. This process requires both complexes for efficient degradation of damaged ubiquitinated SG proteins during recovery from arsenite stress, and hence avoiding aberrant cytoplasmic SGs degradation via autophagy. The chain is AN1-type zinc finger protein 1 from Homo sapiens (Human).